Consider the following 508-residue polypeptide: Maturase K (508 aa).

This sequence belongs to the intron maturase 2 family. MatK subfamily.

Its subcellular location is the plastid. It is found in the chloroplast. In terms of biological role, usually encoded in the trnK tRNA gene intron. Probably assists in splicing its own and other chloroplast group II introns. The protein is Maturase K of Pelargonium hortorum (Common geranium).